The following is a 200-amino-acid chain: GTP cyclohydrolase-2 (200 aa).

A GTP-binding site is contributed by arginine 50–glutamate 54. Zn(2+) contacts are provided by cysteine 55, cysteine 66, and cysteine 68. Residues glutamine 71, glutamate 93–arginine 95, and threonine 115 contribute to the GTP site. Aspartate 127 serves as the catalytic Proton acceptor. Arginine 129 functions as the Nucleophile in the catalytic mechanism. Positions 150 and 155 each coordinate GTP.

The protein belongs to the GTP cyclohydrolase II family. It depends on Zn(2+) as a cofactor.

The catalysed reaction is GTP + 4 H2O = 2,5-diamino-6-hydroxy-4-(5-phosphoribosylamino)-pyrimidine + formate + 2 phosphate + 3 H(+). Its pathway is cofactor biosynthesis; riboflavin biosynthesis; 5-amino-6-(D-ribitylamino)uracil from GTP: step 1/4. Its function is as follows. Catalyzes the conversion of GTP to 2,5-diamino-6-ribosylamino-4(3H)-pyrimidinone 5'-phosphate (DARP), formate and pyrophosphate. In Acinetobacter baylyi (strain ATCC 33305 / BD413 / ADP1), this protein is GTP cyclohydrolase-2.